The chain runs to 88 residues: Large ribosomal subunit protein eL34 (88 aa).

The interval 41 to 72 (RPLNGIPRGRPNELRKLPKTKKRPERPMPNLC) is disordered.

Belongs to the eukaryotic ribosomal protein eL34 family.

The protein is Large ribosomal subunit protein eL34 of Thermococcus sibiricus (strain DSM 12597 / MM 739).